The sequence spans 232 residues: MEVIRKTFFKKSRLEETSLEEIQLILASASPRRLALLAQIGLDPHQVYATNIDETPKLREHPANLAKRLAKEKALKAQETFLWRDQSSGEKVSAQKIVILAADTVVAVGRTILPSPESEDEAYECLRFLSGRAHKVYGAVCALNECGKITVKLVESCVRFRRLTSPMMEAYLYSGEWQGKAGGYAIQGKAGAFVVYIAGSYSNVVGLPLAETMDLLTAYHYPLLTHWNGKTH.

The Proton acceptor role is filled by Asp-103.

This sequence belongs to the Maf family. YhdE subfamily. It depends on a divalent metal cation as a cofactor.

Its subcellular location is the cytoplasm. It carries out the reaction dTTP + H2O = dTMP + diphosphate + H(+). The catalysed reaction is UTP + H2O = UMP + diphosphate + H(+). Functionally, nucleoside triphosphate pyrophosphatase that hydrolyzes dTTP and UTP. May have a dual role in cell division arrest and in preventing the incorporation of modified nucleotides into cellular nucleic acids. This chain is dTTP/UTP pyrophosphatase, found in Bartonella henselae (strain ATCC 49882 / DSM 28221 / CCUG 30454 / Houston 1) (Rochalimaea henselae).